The sequence spans 1027 residues: Presequence protease, mitochondrial (1027 aa).

Residues 1-22 constitute a mitochondrion transit peptide; sequence MIRQCRAGLRLCRALYQTSYRW. His98 serves as a coordination point for Zn(2+). The Proton acceptor role is filled by Glu101. Residues His102 and Glu199 each coordinate Zn(2+). Residues Cys113 and Cys550 are joined by a disulfide bond. The tract at residues 800–829 is disordered; sequence KKERKSIRPHVVEKSSSPSSSGSEISRRAT. Low complexity predominate over residues 814–823; that stretch reads SSSPSSSGSE.

This sequence belongs to the peptidase M16 family. PreP subfamily. In terms of assembly, monomer and homodimer; homodimerization is induced by binding of the substrate. Requires Zn(2+) as cofactor. A disulfide bond locks the enzyme in the closed conformation preventing substrate entry into the catalytic chamber.

The protein localises to the mitochondrion matrix. Its activity is regulated as follows. Mainly exists in a closed and catalytically competent conformation but a closed-to-open switch allows substrate entry into the catalytic chamber. Substrate binding induces closure and dimerization. A disulfide bond may lock the enzyme in a closed conformation preventing substrate entry into the catalytic chamber, participating in redox regulation of the enzyme. Inhibited by metal-chelating agents. Inhibited by nickel and zinc excess, and slightly activated by manganese. Its function is as follows. Metalloendopeptidase of the mitochondrial matrix that functions in peptide cleavage and degradation rather than in protein processing. Has an ATP-independent activity. Specifically cleaves peptides in the range of 5 to 65 residues. Shows a preference for cleavage after small polar residues and before basic residues, but without any positional preference. Degrades the transit peptides of mitochondrial proteins after their cleavage. Also degrades other unstructured peptides. The polypeptide is Presequence protease, mitochondrial (pitrm1) (Xenopus tropicalis (Western clawed frog)).